Here is a 233-residue protein sequence, read N- to C-terminus: MTSRPLSPLAIFDLDGTLVDTAADLVSSLNHTIAAAGLAPVTYDDLTHLVGQGARVMIKRAFALRETELPEADIDPLYERFITHYRAEMPGESRPYPGIIETLDALSQAGITLAVCTNKTEILAVPLLEKLGLTRYFAAITCGDTFAFRKPDARHILGTIEKAGGDVQRSIMVGDSINDILAARNAAVPSIGVTFGYTDVPMVELEPDVVIDDFAALTPALFEKLVSKGAAAA.

The active-site Nucleophile is aspartate 13. Residues aspartate 13, aspartate 15, and aspartate 175 each contribute to the Mg(2+) site.

The protein belongs to the HAD-like hydrolase superfamily. CbbY/CbbZ/Gph/YieH family. Requires Mg(2+) as cofactor.

It carries out the reaction 2-phosphoglycolate + H2O = glycolate + phosphate. The protein operates within organic acid metabolism; glycolate biosynthesis; glycolate from 2-phosphoglycolate: step 1/1. Functionally, specifically catalyzes the dephosphorylation of 2-phosphoglycolate. Is involved in the dissimilation of the intracellular 2-phosphoglycolate formed during the DNA repair of 3'-phosphoglycolate ends, a major class of DNA lesions induced by oxidative stress. In Agrobacterium fabrum (strain C58 / ATCC 33970) (Agrobacterium tumefaciens (strain C58)), this protein is Phosphoglycolate phosphatase.